A 154-amino-acid chain; its full sequence is Ribosomal RNA-processing protein 14-N (154 aa).

Residues 36–154 are disordered; that stretch reads WKQKKSTLEE…KHKASPRAGF (119 aa). A Phosphoserine modification is found at serine 80. At threonine 83 the chain carries Phosphothreonine. Residues 105–133 are compositionally biased toward basic and acidic residues; the sequence is QDLREKRKAGDLNQKRQNKRPVENEKDSQ. Residues 140 to 154 show a composition bias toward basic residues; it reads KVQKKKHKASPRAGF.

It belongs to the SURF6 family.

It is found in the nucleus. Its subcellular location is the nucleolus. Functionally, involved in ribosome biogenesis and cell polarity. Required for the synthesis of both 40S and 60S ribosomal subunits and may also play some direct role in correct positioning of the mitotic spindle during mitosis. The sequence is that of Ribosomal RNA-processing protein 14-N (rrp14n) from Schizosaccharomyces pombe (strain 972 / ATCC 24843) (Fission yeast).